The following is a 103-amino-acid chain: Cell division protein FtsB (103 aa).

At 1-3 the chain is on the cytoplasmic side; that stretch reads MGK. The helical transmembrane segment at 4–21 threads the bilayer; the sequence is LTLLLLAILVWLQYSLWF. Topologically, residues 22-103 are periplasmic; the sequence is GKNGIHDYTR…RAQSAGQNNR (82 aa). A coiled-coil region spans residues 31–71; the sequence is RVNDDVAAQQATNAKLKARNDQLFAEIDDLNGGQEALEERA.

It belongs to the FtsB family. As to quaternary structure, part of a complex composed of FtsB, FtsL and FtsQ.

The protein localises to the cell inner membrane. Essential cell division protein. May link together the upstream cell division proteins, which are predominantly cytoplasmic, with the downstream cell division proteins, which are predominantly periplasmic. In Shigella boydii serotype 18 (strain CDC 3083-94 / BS512), this protein is Cell division protein FtsB.